The chain runs to 78 residues: Large ribosomal subunit protein bL28 (78 aa).

This sequence belongs to the bacterial ribosomal protein bL28 family.

The chain is Large ribosomal subunit protein bL28 from Pseudomonas aeruginosa (strain LESB58).